The primary structure comprises 172 residues: 3-hydroxydecanoyl-[acyl-carrier-protein] dehydratase (172 aa).

The active site involves H71.

It belongs to the thioester dehydratase family. FabA subfamily. Homodimer.

It is found in the cytoplasm. The enzyme catalyses a (3R)-hydroxyacyl-[ACP] = a (2E)-enoyl-[ACP] + H2O. It catalyses the reaction (3R)-hydroxydecanoyl-[ACP] = (2E)-decenoyl-[ACP] + H2O. It carries out the reaction (2E)-decenoyl-[ACP] = (3Z)-decenoyl-[ACP]. Its pathway is lipid metabolism; fatty acid biosynthesis. Functionally, necessary for the introduction of cis unsaturation into fatty acids. Catalyzes the dehydration of (3R)-3-hydroxydecanoyl-ACP to E-(2)-decenoyl-ACP and then its isomerization to Z-(3)-decenoyl-ACP. Can catalyze the dehydratase reaction for beta-hydroxyacyl-ACPs with saturated chain lengths up to 16:0, being most active on intermediate chain length. The polypeptide is 3-hydroxydecanoyl-[acyl-carrier-protein] dehydratase (Blochmanniella floridana).